The following is a 736-amino-acid chain: Phosphoribosylformylglycinamidine synthase subunit PurL (736 aa).

The active site involves His49. ATP-binding residues include Tyr52 and Lys91. A Mg(2+)-binding site is contributed by Glu93. Substrate contacts are provided by residues 94-97 (SHNH) and Arg116. His95 acts as the Proton acceptor in catalysis. Asp117 serves as a coordination point for Mg(2+). Substrate is bound at residue Gln240. Mg(2+) is bound at residue Asp268. 312–314 (ESQ) is a binding site for substrate. 2 residues coordinate ATP: Asp493 and Gly530. A Mg(2+)-binding site is contributed by Asn531. Ser533 is a binding site for substrate.

This sequence belongs to the FGAMS family. As to quaternary structure, monomer. Part of the FGAM synthase complex composed of 1 PurL, 1 PurQ and 2 PurS subunits.

The protein resides in the cytoplasm. It catalyses the reaction N(2)-formyl-N(1)-(5-phospho-beta-D-ribosyl)glycinamide + L-glutamine + ATP + H2O = 2-formamido-N(1)-(5-O-phospho-beta-D-ribosyl)acetamidine + L-glutamate + ADP + phosphate + H(+). It participates in purine metabolism; IMP biosynthesis via de novo pathway; 5-amino-1-(5-phospho-D-ribosyl)imidazole from N(2)-formyl-N(1)-(5-phospho-D-ribosyl)glycinamide: step 1/2. Part of the phosphoribosylformylglycinamidine synthase complex involved in the purines biosynthetic pathway. Catalyzes the ATP-dependent conversion of formylglycinamide ribonucleotide (FGAR) and glutamine to yield formylglycinamidine ribonucleotide (FGAM) and glutamate. The FGAM synthase complex is composed of three subunits. PurQ produces an ammonia molecule by converting glutamine to glutamate. PurL transfers the ammonia molecule to FGAR to form FGAM in an ATP-dependent manner. PurS interacts with PurQ and PurL and is thought to assist in the transfer of the ammonia molecule from PurQ to PurL. This is Phosphoribosylformylglycinamidine synthase subunit PurL from Rhodopseudomonas palustris (strain TIE-1).